The sequence spans 299 residues: 4-hydroxybenzoate octaprenyltransferase (299 aa).

The next 8 helical transmembrane spans lie at 33 to 53 (VGFLLLLWPTWWALWLAAGGV), 56 to 76 (WWTLCVFTTGIWLTRSAGCVI), 107 to 127 (LLMFATLMLIAFGLVLTMNQL), 151 to 171 (LPQVYLGLAFGWGIPMAFAAI), 180 to 200 (WLLYVANILWTTAYDTWCAMV), 214 to 234 (AILFADLDLTVQGVLYTLMLF), 247 to 267 (HTYWISLIAAVALIGYQFIIA), and 278 to 298 (AFMHNNWVGMTIFAGIALATT).

The protein belongs to the UbiA prenyltransferase family. Requires Mg(2+) as cofactor.

The protein localises to the cell inner membrane. It carries out the reaction all-trans-octaprenyl diphosphate + 4-hydroxybenzoate = 4-hydroxy-3-(all-trans-octaprenyl)benzoate + diphosphate. The protein operates within cofactor biosynthesis; ubiquinone biosynthesis. Its function is as follows. Catalyzes the prenylation of para-hydroxybenzoate (PHB) with an all-trans polyprenyl group. Mediates the second step in the final reaction sequence of ubiquinone-8 (UQ-8) biosynthesis, which is the condensation of the polyisoprenoid side chain with PHB, generating the first membrane-bound Q intermediate 3-octaprenyl-4-hydroxybenzoate. In Xylella fastidiosa (strain 9a5c), this protein is 4-hydroxybenzoate octaprenyltransferase.